Consider the following 488-residue polypeptide: Cardiolipin synthase 2 (488 aa).

A run of 2 helical transmembrane segments spans residues 8–28 and 39–59; these read IIINILLVSAFLLNLVFAFII and IWAWLLVLVFLPLVGFILYLL. PLD phosphodiesterase domains are found at residues 223–250 and 401–428; these read MNNRNHRKIVVIDGTIGYVGGFNVGDEY and DNGFLHSKTLVIDDEVASVGTANMDNRS. Residues H228, K230, D235, H406, K408, and D413 contribute to the active site.

The protein belongs to the phospholipase D family. Cardiolipin synthase subfamily.

Its subcellular location is the cell membrane. The enzyme catalyses 2 a 1,2-diacyl-sn-glycero-3-phospho-(1'-sn-glycerol) = a cardiolipin + glycerol. Catalyzes the reversible phosphatidyl group transfer from one phosphatidylglycerol molecule to another to form cardiolipin (CL) (diphosphatidylglycerol) and glycerol. The polypeptide is Cardiolipin synthase 2 (cls2) (Staphylococcus epidermidis (strain ATCC 35984 / DSM 28319 / BCRC 17069 / CCUG 31568 / BM 3577 / RP62A)).